A 259-amino-acid chain; its full sequence is Ribonuclease HII (259 aa).

One can recognise an RNase H type-2 domain in the interval glutamate 72–serine 259. A divalent metal cation-binding residues include aspartate 78, glutamate 79, and aspartate 170.

Belongs to the RNase HII family. It depends on Mn(2+) as a cofactor. Requires Mg(2+) as cofactor.

The protein localises to the cytoplasm. The enzyme catalyses Endonucleolytic cleavage to 5'-phosphomonoester.. Endonuclease that specifically degrades the RNA of RNA-DNA hybrids. The protein is Ribonuclease HII of Geobacillus thermodenitrificans (strain NG80-2).